The sequence spans 122 residues: uncharacterized protein (122 aa).

The signal sequence occupies residues Met-1 to Cys-20.

The protein resides in the secreted. This is an uncharacterized protein from Homo sapiens (Human).